The primary structure comprises 226 residues: Putative N-acetylmannosamine-6-phosphate 2-epimerase (226 aa).

This sequence belongs to the NanE family.

It carries out the reaction an N-acyl-D-glucosamine 6-phosphate = an N-acyl-D-mannosamine 6-phosphate. It functions in the pathway amino-sugar metabolism; N-acetylneuraminate degradation; D-fructose 6-phosphate from N-acetylneuraminate: step 3/5. Its function is as follows. Converts N-acetylmannosamine-6-phosphate (ManNAc-6-P) to N-acetylglucosamine-6-phosphate (GlcNAc-6-P). The sequence is that of Putative N-acetylmannosamine-6-phosphate 2-epimerase from Mycoplasma capricolum subsp. capricolum (strain California kid / ATCC 27343 / NCTC 10154).